Here is a 597-residue protein sequence, read N- to C-terminus: Elongation factor 4 (597 aa).

In terms of domain architecture, tr-type G spans 2–184; sequence KNIRNFSIIA…EIVAKIPAPA (183 aa). GTP contacts are provided by residues 14–19 and 131–134; these read DHGKST and NKID.

It belongs to the TRAFAC class translation factor GTPase superfamily. Classic translation factor GTPase family. LepA subfamily.

It localises to the cell inner membrane. It carries out the reaction GTP + H2O = GDP + phosphate + H(+). Functionally, required for accurate and efficient protein synthesis under certain stress conditions. May act as a fidelity factor of the translation reaction, by catalyzing a one-codon backward translocation of tRNAs on improperly translocated ribosomes. Back-translocation proceeds from a post-translocation (POST) complex to a pre-translocation (PRE) complex, thus giving elongation factor G a second chance to translocate the tRNAs correctly. Binds to ribosomes in a GTP-dependent manner. This is Elongation factor 4 from Neisseria meningitidis serogroup A / serotype 4A (strain DSM 15465 / Z2491).